A 362-amino-acid chain; its full sequence is Porin Omp2b (362 aa).

The N-terminal stretch at 1–22 (MNIKSLLLGSAAALVAASGAQA) is a signal peptide.

The protein belongs to the alphaproteobacteria porin family. As to quaternary structure, homotrimer.

It localises to the cell outer membrane. Its function is as follows. Forms passive diffusion pores that allow small molecular weight hydrophilic materials across the outer membrane. The polypeptide is Porin Omp2b (omp2b) (Brucella neotomae).